A 192-amino-acid polypeptide reads, in one-letter code: uncharacterized protein (192 aa).

The signal sequence occupies residues 1-18 (MNSKFILKYFILAFFLVS). Residue Cys19 is the site of N-palmitoyl cysteine attachment. Residue Cys19 is the site of S-diacylglycerol cysteine attachment.

The protein localises to the cell membrane. This is an uncharacterized protein from Borreliella burgdorferi (strain ATCC 35210 / DSM 4680 / CIP 102532 / B31) (Borrelia burgdorferi).